The primary structure comprises 287 residues: uncharacterized protein (287 aa).

This is an uncharacterized protein from Methanocaldococcus jannaschii (strain ATCC 43067 / DSM 2661 / JAL-1 / JCM 10045 / NBRC 100440) (Methanococcus jannaschii).